Reading from the N-terminus, the 260-residue chain is Ribosomal RNA small subunit methyltransferase G (260 aa).

The tract at residues 1-45 (MKQRGPAGGRSSSPKPSAPGSGAGEGPDGRSAPASQKINKASAND) is disordered. Residues 9 to 20 (GRSSSPKPSAPG) are compositionally biased toward low complexity. Positions 33–45 (PASQKINKASAND) are enriched in polar residues. Glycine 123, phenylalanine 128, and arginine 193 together coordinate S-adenosyl-L-methionine.

Belongs to the methyltransferase superfamily. RNA methyltransferase RsmG family.

The protein resides in the cytoplasm. The catalysed reaction is guanosine(527) in 16S rRNA + S-adenosyl-L-methionine = N(7)-methylguanosine(527) in 16S rRNA + S-adenosyl-L-homocysteine. Specifically methylates the N7 position of guanine in position 527 of 16S rRNA. The protein is Ribosomal RNA small subunit methyltransferase G of Bradyrhizobium diazoefficiens (strain JCM 10833 / BCRC 13528 / IAM 13628 / NBRC 14792 / USDA 110).